Consider the following 313-residue polypeptide: Probable GTP 3',8-cyclase (313 aa).

The region spanning 4–224 is the Radical SAM core domain; that stretch reads VYGRELEDLR…EIRNKHKRPR (221 aa). Arg13 contributes to the GTP binding site. Residues Cys20, Cys24, and Cys27 each coordinate [4Fe-4S] cluster. Residue Lys60 participates in GTP binding. Gly64 provides a ligand contact to S-adenosyl-L-methionine. Thr90 is a GTP binding site. Ser114 contributes to the S-adenosyl-L-methionine binding site. Lys151 lines the GTP pocket. Residues Cys244 and Cys247 each contribute to the [4Fe-4S] cluster site. 249–251 serves as a coordination point for GTP; that stretch reads RIR. [4Fe-4S] cluster is bound at residue Cys261.

This sequence belongs to the radical SAM superfamily. MoaA family. [4Fe-4S] cluster is required as a cofactor.

The catalysed reaction is GTP + AH2 + S-adenosyl-L-methionine = (8S)-3',8-cyclo-7,8-dihydroguanosine 5'-triphosphate + 5'-deoxyadenosine + L-methionine + A + H(+). It participates in cofactor biosynthesis; molybdopterin biosynthesis. Its function is as follows. Catalyzes the cyclization of GTP to (8S)-3',8-cyclo-7,8-dihydroguanosine 5'-triphosphate. The chain is Probable GTP 3',8-cyclase from Sulfolobus acidocaldarius (strain ATCC 33909 / DSM 639 / JCM 8929 / NBRC 15157 / NCIMB 11770).